A 117-amino-acid chain; its full sequence is G antigen 12H (117 aa).

The disordered stretch occupies residues 1-117 (MSWRGRSTYY…PEEGEKQSQC (117 aa)). Acidic residues-rich tracts occupy residues 32-45 (FSDE…EEGE) and 87-96 (ECEDGPDGQE). The segment covering 103-117 (EEVKTPEEGEKQSQC) has biased composition (basic and acidic residues).

This sequence belongs to the GAGE family.

In Homo sapiens (Human), this protein is G antigen 12H (GAGE12H).